The sequence spans 510 residues: Metalloprotease TIKI homolog (510 aa).

The first 30 residues, Met-1 to Gly-30, serve as a signal peptide directing secretion. The Extracellular segment spans residues Ser-31–Arg-489. Asn-37, Asn-98, Asn-108, Asn-141, Asn-223, Asn-281, Asn-322, Asn-383, and Asn-417 each carry an N-linked (GlcNAc...) asparagine glycan. The segment covering Thr-435–Ser-471 has biased composition (low complexity). The interval Thr-435 to Asp-477 is disordered. A helical transmembrane segment spans residues Tyr-490 to Leu-510.

Belongs to the TIKI family. Requires Mn(2+) as cofactor. Co(2+) serves as cofactor.

The protein resides in the membrane. Its function is as follows. Metalloprotease. This is Metalloprotease TIKI homolog from Amphimedon queenslandica (Sponge).